Reading from the N-terminus, the 123-residue chain is Large ribosomal subunit protein eL8 (123 aa).

It belongs to the eukaryotic ribosomal protein eL8 family. Part of the 50S ribosomal subunit. Probably part of the RNase P complex.

The protein localises to the cytoplasm. In terms of biological role, multifunctional RNA-binding protein that recognizes the K-turn motif in ribosomal RNA, the RNA component of RNase P, box H/ACA, box C/D and box C'/D' sRNAs. The chain is Large ribosomal subunit protein eL8 from Thermococcus gammatolerans (strain DSM 15229 / JCM 11827 / EJ3).